A 76-amino-acid chain; its full sequence is uncharacterized protein (76 aa).

Helical transmembrane passes span M1–L21, C35–I55, and N56–I76.

Its subcellular location is the cell membrane. This is an uncharacterized protein from Borreliella burgdorferi (strain ATCC 35210 / DSM 4680 / CIP 102532 / B31) (Borrelia burgdorferi).